Here is a 155-residue protein sequence, read N- to C-terminus: Interleukin-2 (155 aa).

The signal sequence occupies residues 1 to 20 (MYSRQLASCVALALVLLANS). Thr-23 is a glycosylation site (O-linked (GalNAc...) threonine). Residues Cys-78 and Cys-126 are joined by a disulfide bond.

This sequence belongs to the IL-2 family.

It is found in the secreted. Cytokine produced by activated CD4-positive helper T-cells and to a lesser extend activated CD8-positive T-cells and natural killer (NK) cells that plays pivotal roles in the immune response and tolerance. Binds to a receptor complex composed of either the high-affinity trimeric IL-2R (IL2RA/CD25, IL2RB/CD122 and IL2RG/CD132) or the low-affinity dimeric IL-2R (IL2RB and IL2RG). Interaction with the receptor leads to oligomerization and conformation changes in the IL-2R subunits resulting in downstream signaling starting with phosphorylation of JAK1 and JAK3. In turn, JAK1 and JAK3 phosphorylate the receptor to form a docking site leading to the phosphorylation of several substrates including STAT5. This process leads to activation of several pathways including STAT, phosphoinositide-3-kinase/PI3K and mitogen-activated protein kinase/MAPK pathways. Functions as a T-cell growth factor and can increase NK-cell cytolytic activity as well. Promotes strong proliferation of activated B-cells and subsequently immunoglobulin production. Plays a pivotal role in regulating the adaptive immune system by controlling the survival and proliferation of regulatory T-cells, which are required for the maintenance of immune tolerance. Moreover, participates in the differentiation and homeostasis of effector T-cell subsets, including Th1, Th2, Th17 as well as memory CD8-positive T-cells. The sequence is that of Interleukin-2 (IL2) from Meriones unguiculatus (Mongolian jird).